A 124-amino-acid chain; its full sequence is Small ribosomal subunit protein uS12 (124 aa).

Asp-89 bears the 3-methylthioaspartic acid mark. The tract at residues 105-124 (QGVKNRKQARSRYGAKKEKS) is disordered. Positions 108 to 118 (KNRKQARSRYG) are enriched in basic residues.

This sequence belongs to the universal ribosomal protein uS12 family. In terms of assembly, part of the 30S ribosomal subunit. Contacts proteins S8 and S17. May interact with IF1 in the 30S initiation complex.

In terms of biological role, with S4 and S5 plays an important role in translational accuracy. Its function is as follows. Interacts with and stabilizes bases of the 16S rRNA that are involved in tRNA selection in the A site and with the mRNA backbone. Located at the interface of the 30S and 50S subunits, it traverses the body of the 30S subunit contacting proteins on the other side and probably holding the rRNA structure together. The combined cluster of proteins S8, S12 and S17 appears to hold together the shoulder and platform of the 30S subunit. This chain is Small ribosomal subunit protein uS12, found in Mycobacterium leprae (strain Br4923).